We begin with the raw amino-acid sequence, 558 residues long: Glypican-1 (558 aa).

The signal sequence occupies residues 1–23; sequence MELRARGWWLLCAAAALVACTRG. Disulfide bonds link Cys-32–Cys-68, Cys-62–Cys-256, Cys-69–Cys-259, Cys-191–Cys-343, Cys-246–Cys-279, Cys-268–Cys-415, and Cys-272–Cys-401. N-linked (GlcNAc...) asparagine glycosylation is found at Asn-79 and Asn-116. The interval 478 to 531 is disordered; that stretch reads FQDASDDGSGSGSGGGCPDDACGRRVSKKSSSSRTPLIHALPGLSEQEGQKTSA. 3 O-linked (Xyl...) (heparan sulfate) serine glycosylation sites follow: Ser-486, Ser-488, and Ser-490. Ser-530 carries the GPI-anchor amidated serine lipid modification. Residues 531 to 558 constitute a propeptide, removed in mature form; sequence AATRPEPHYFFLLFLFTLVLAAARPRWR.

This sequence belongs to the glypican family. S-nitrosylated in a Cu(2+)-dependent manner. Nitric acid (NO) is released from the nitrosylated cysteines by ascorbate or by some other reducing agent, in a Cu(2+) or Zn(2+) dependent manner. This free nitric oxide is then capable of cleaving the heparan sulfate side chains. In terms of processing, N- and O-glycosylated. N-glycosylation is mainly of the complex type containing sialic acid. O-glycosylated with heparan sulfate. The heparan sulfate chains can be cleaved either by the action of heparanase or, degraded by a deaminative process that uses nitric oxide (NO) released from the S-nitrosylated cysteines. This process is triggered by ascorbate, or by some other reducing agent, in a Cu(2+)- or Zn(2+) dependent manner. Cu(2+) ions are provided by ceruloproteins such as APP, PRNP or CP which associate with GCP1 in intracellular compartments or lipid rafts. Post-translationally, this cell-associated glypican is further processed to give rise to a medium-released species. Nervous system.

The protein resides in the cell membrane. The protein localises to the endosome. It localises to the secreted. Its subcellular location is the extracellular space. Cell surface proteoglycan that bears heparan sulfate. May act as a catalyst in increasing the rate of conversion of prion protein PRPN(C) to PRNP(Sc) via associating (via the heparan sulfate side chains) with both forms of PRPN, targeting them to lipid rafts and facilitating their interaction. Required for proper skeletal muscle differentiation by sequestering FGF2 in lipid rafts preventing its binding to receptors (FGFRs) and inhibiting the FGF-mediated signaling. Binds Cu(2+) or Zn(2+) ions. Binds, via the heparan sulfate side chains, alpha-4 (V) collagen and participates in Schwann cell myelination. This Rattus norvegicus (Rat) protein is Glypican-1 (Gpc1).